A 118-amino-acid chain; its full sequence is Large ribosomal subunit protein eL18 (118 aa).

Belongs to the eukaryotic ribosomal protein eL18 family.

In Sulfurisphaera tokodaii (strain DSM 16993 / JCM 10545 / NBRC 100140 / 7) (Sulfolobus tokodaii), this protein is Large ribosomal subunit protein eL18.